The sequence spans 104 residues: Histone-like protein p6 (104 aa).

A DNA-binding region spans residues 1 to 19 (MAKMMQREITKTTVNVAKM). The interval 85–104 (VEKDEDQEEQTEAPEEQVAE) is disordered. Positions 88-104 (DEDQEEQTEAPEEQVAE) are enriched in acidic residues.

The protein belongs to the phi29likevirus histone-like protein p6 family. As to quaternary structure, homodimer. Homomultimer. Binds to double-stranded DNA giving rise to multimeric nucleoprotein complexes. Binding specificity for the viral DNA is based on supercoiling, the viral genome having a negative superhelicity lower than that of plasmid DNA. Interacts with the DNA replication protein p17; this interaction optimizes the binding of protein p6 at the viral DNA ends, thus favoring the initiation of replication. Interacts with the late genes activator p4 (via C-terminus).

In terms of biological role, histone-like nucleoprotein that binds to the viral dsDNA and responsible for wrapping and compacting the viral DNA about 4-fold. Forms a nucleoprotein complex in which the DNA adopts a right-handed toroidal conformation winding around a protein core. Binds ito most, if not all, the viral genome, although with different affinity, the highest one corresponding to the genome ends. The formation of the nucleoprotein complex at the genome ends, activates the initiation of viral DNA replication. The binding of p6 would recruit the complex formed by the TP and the DNA polymerase to the origin. Protein p6 also represses early transcription from promoter C2, and, together with protein p4, represses transcription from promoters A2b and A2c and activates late transcription from promoter A3. Protein p6 is therefore involved in the early to late transcription switch. The formation of the nucleoprotein complex at the right end of the phage genome where the early promoter C2 is located affects local topology, which may contribute to the promoter repression. The polypeptide is Histone-like protein p6 (6) (Bacillus subtilis (Bacteriophage phi-29)).